Reading from the N-terminus, the 428-residue chain is Metal tolerance protein 10 (428 aa).

Residues 1-140 are Cytoplasmic-facing; it reads MPLNSYIFFL…EMKKLAKSER (140 aa). A helical transmembrane segment spans residues 141-161; that stretch reads LAVHISNATNLVLFVAKVYAS. Residues 162 to 167 lie on the Vacuolar side of the membrane; sequence MESRSM. The chain crosses the membrane as a helical span at residues 168–188; the sequence is AVIASTLDSLLDLLSGFILWF. Topologically, residues 189-209 are cytoplasmic; the sequence is TANAMRKPNQFHYPIGKRRMQ. Residues 210-230 form a helical membrane-spanning segment; the sequence is PVGIIVFASVMATLGLQVLLE. Residues 231–248 lie on the Vacuolar side of the membrane; it reads SGRQLVAKSGIHMNSTEE. The helical transmembrane segment at 249 to 269 threads the bilayer; that stretch reads KWMIGIMVSVTIVKFLLMLYC. The Cytoplasmic portion of the chain corresponds to 270-287; that stretch reads RGFQNEIVRAYAQDHLFD. A helical transmembrane segment spans residues 288–308; sequence VVTNSIGLATAVLAVKFYWWI. At 309–311 the chain is on the vacuolar side; that stretch reads DPT. The chain crosses the membrane as a helical span at residues 312–332; that stretch reads GAILIALYTIATWARTVLENV. Residues 333 to 428 lie on the Cytoplasmic side of the membrane; it reads HSLIGRSAPP…FTHRPEHKCN (96 aa).

This sequence belongs to the cation diffusion facilitator (CDF) transporter (TC 2.A.4) family. SLC30A subfamily.

Its subcellular location is the vacuole membrane. Involved in sequestration of excess metal in the cytoplasm into vacuoles to maintain metal homeostasis. This chain is Metal tolerance protein 10 (MTP10), found in Arabidopsis thaliana (Mouse-ear cress).